The following is a 242-amino-acid chain: tRNA (guanine-N(1)-)-methyltransferase (242 aa).

S-adenosyl-L-methionine is bound by residues Gly109 and 129-134; that span reads LGDFVL.

The protein belongs to the RNA methyltransferase TrmD family. Homodimer.

Its subcellular location is the cytoplasm. The enzyme catalyses guanosine(37) in tRNA + S-adenosyl-L-methionine = N(1)-methylguanosine(37) in tRNA + S-adenosyl-L-homocysteine + H(+). Functionally, specifically methylates guanosine-37 in various tRNAs. This chain is tRNA (guanine-N(1)-)-methyltransferase, found in Exiguobacterium sibiricum (strain DSM 17290 / CCUG 55495 / CIP 109462 / JCM 13490 / 255-15).